The primary structure comprises 1563 residues: Superkiller complex protein 3 (1563 aa).

Ser-2 carries the post-translational modification N-acetylserine. TPR repeat units lie at residues 6–39 (VKTALKSARDAIRNKEYKEALKHCKTVLKQEKNN), 40–73 (YNAWVFIGVAAAELEQPDQAQGAYKKAAELEPEQ), 157–196 (YELWRKLSQLLAENIEDQNNETQQMLLTAFENALDLADNI), 272–305 (GPGLIGLGIIALQDKKYEDAVRHLTEGLKESPVC), 307–339 (AGWCHLAEAQVKMHRPKEAILSCNQALKTIDNF), 386–419 (PGLLVLQGLACLNTGAVDKATKIMEDLVTSYPDL), 420–453 (AEAHALEGRVHFTKKDYVQAEVSFQRALEKDAEV), 455–492 (EYHYQLGLTYWFMGEETRKDKTKALTHFLKAARLDAHM), 493–527 (GKVFCYLGHYYRDVAGDRNRARGCYRKAFELDDND), 564–597 (KWAWLRRGLYHLKAGQHSQAVADLQAALRADPKD), 598–631 (CNCWESLGEAYLSRGGYTTALKSFMKASELNPDS), 632–665 (TYSVFKVAAIQQILGRYSEAIAQYQLIIKMKEDY), 633–665 (YSVFKVAAIQQILGRYSEAIAQYQLIIKMKEDY), 673–713 (GECH…RADV), 790–824 (VQHLAETGSSMSDLTELLEKSLHCLKKAVRLDSNN), 826–860 (LHWNALGVVACYRGVGNYALAQHCFIKSIQAEQIN), 861–894 (AAAWTNLGVLYLATENIEQAHEAFKMAQSLDPSY), 980–1013 (ASAFTMLGYLNEHLQLKKEAAEAYQRATTLLHSA), 1020–1053 (NVAVRNWGRLLCSIGDYDRAIQAFKSTPLVELED), 1055–1084 (IGFALALFMKGLYKESGSAYERALAVCKSE), 1325–1358 (KWSFSQVVTGLIDTGKTSEAESLCTQSLKSNPDQ), and 1399–1432 (VPAWQWLAQVYQSQGMMGAAEMCYRKSLQVASQQ).

Belongs to the SKI3 family. Component of the SKI complex which consists of SKIC2, SKIC3 and SKIC8. Interacts with PAF1.

It localises to the cytoplasm. The protein localises to the nucleus. Its function is as follows. Component of the SKI complex, a multiprotein complex that assists the RNA-degrading exosome during the mRNA decay and quality-control pathways. The SKI complex catalyzes mRNA extraction from 80S ribosomal complexes in the 3'-5' direction and channels mRNA to the cytosolic exosome for degradation. SKI-mediated extraction of mRNA from stalled ribosomes allow binding of the Pelota-HBS1L complex and subsequent ribosome disassembly by ABCE1 for ribosome recycling. In the nucleus, the SKI complex associates with transcriptionally active genes in a manner dependent on PAF1 complex (PAF1C). The chain is Superkiller complex protein 3 from Mus musculus (Mouse).